The primary structure comprises 277 residues: Large ribosomal subunit protein uL2 (277 aa).

Residues 199-277 (DHMNTSVGKA…ILISRHKRKK (79 aa)) are disordered. Over residues 209–220 (GRTRWMGRRPHN) the composition is skewed to basic residues.

The protein belongs to the universal ribosomal protein uL2 family. Part of the 50S ribosomal subunit. Forms a bridge to the 30S subunit in the 70S ribosome.

One of the primary rRNA binding proteins. Required for association of the 30S and 50S subunits to form the 70S ribosome, for tRNA binding and peptide bond formation. It has been suggested to have peptidyltransferase activity; this is somewhat controversial. Makes several contacts with the 16S rRNA in the 70S ribosome. The protein is Large ribosomal subunit protein uL2 of Nitrobacter winogradskyi (strain ATCC 25391 / DSM 10237 / CIP 104748 / NCIMB 11846 / Nb-255).